A 435-amino-acid chain; its full sequence is Zinc finger CCCH domain-containing protein 16 (435 aa).

The C3H1-type zinc finger occupies 1–27 (MRKELCRNFQRGSCRYGENCRFLHPQQ). Positions 2 to 88 (RKELCRNFQR…ASTPTGGGAA (87 aa)) are 6 X 2 AA repeats of F-G. 2 disordered regions span residues 25 to 105 (PQQA…DHKC) and 205 to 374 (TPSI…SQNN). Tandem repeats lie at residues 34–35 (FG) and 36–37 (FG). Residues 39–51 (QNQQQQQQQQQQN) show a composition bias toward low complexity. 2 repeat units span residues 56–57 (FG) and 58–59 (FG). The span at 63–77 (GGSSRPNQFQNTWSR) shows a compositional bias: polar residues. Over residues 78–99 (TASTPTGGGAAASTQQTGKQTQ) the composition is skewed to low complexity. Composition is skewed to polar residues over residues 205–320 (TPSI…VNTP) and 328–339 (SGFQTNPSTTFK). 2 consecutive repeat copies span residues 343–344 (FG) and 359–360 (FG). The segment covering 351–374 (TTPQNNNIFGQSTPTPATNTSQNN) has biased composition (polar residues).

In terms of assembly, part of the nuclear pore complex (NPC). The NPC has an eight-fold symmetrical structure comprising a central transport channel and two rings, the cytoplasmic and nuclear rings, to which eight filaments are attached. The cytoplasmic filaments have loose ends, while the nuclear filaments are joined in a distal ring, forming a nuclear basket. NPCs are highly dynamic in configuration and composition, and can be devided in 3 subcomplexes, the NUP62 subcomplex, the NUP107-160 subcomplex and the NUP93 subcomplex, containing approximately 30 different nucleoporin proteins.

The protein localises to the nucleus envelope. Its subcellular location is the nucleus. It localises to the nuclear pore complex. This is Zinc finger CCCH domain-containing protein 16 from Arabidopsis thaliana (Mouse-ear cress).